The following is a 222-amino-acid chain: Uridine kinase (222 aa).

13 to 20 (GGSGAGKT) provides a ligand contact to ATP.

Belongs to the uridine kinase family.

It localises to the cytoplasm. It carries out the reaction uridine + ATP = UMP + ADP + H(+). It catalyses the reaction cytidine + ATP = CMP + ADP + H(+). The protein operates within pyrimidine metabolism; CTP biosynthesis via salvage pathway; CTP from cytidine: step 1/3. It participates in pyrimidine metabolism; UMP biosynthesis via salvage pathway; UMP from uridine: step 1/1. The polypeptide is Uridine kinase (Chlamydia pneumoniae (Chlamydophila pneumoniae)).